The following is a 123-amino-acid chain: Large ribosomal subunit protein uL14c (123 aa).

It belongs to the universal ribosomal protein uL14 family. As to quaternary structure, part of the 50S ribosomal subunit.

The protein resides in the plastid. The protein localises to the chloroplast. Functionally, binds to 23S rRNA. The polypeptide is Large ribosomal subunit protein uL14c (Brachypodium distachyon (Purple false brome)).